The primary structure comprises 84 residues: Defensin-like protein 37 (84 aa).

Residues methionine 1–serine 24 form the signal peptide. 3 disulfide bridges follow: cysteine 46–cysteine 67, cysteine 52–cysteine 79, and cysteine 56–cysteine 81.

Belongs to the DEFL family.

Its subcellular location is the secreted. The polypeptide is Defensin-like protein 37 (EDA21) (Arabidopsis thaliana (Mouse-ear cress)).